The following is a 178-amino-acid chain: ATP-dependent protease subunit HslV (178 aa).

Thr-8 is an active-site residue. Residues Gly-163, Cys-166, and Thr-169 each contribute to the Na(+) site.

Belongs to the peptidase T1B family. HslV subfamily. In terms of assembly, a double ring-shaped homohexamer of HslV is capped on each side by a ring-shaped HslU homohexamer. The assembly of the HslU/HslV complex is dependent on binding of ATP.

The protein localises to the cytoplasm. The catalysed reaction is ATP-dependent cleavage of peptide bonds with broad specificity.. Its activity is regulated as follows. Allosterically activated by HslU binding. Protease subunit of a proteasome-like degradation complex believed to be a general protein degrading machinery. This chain is ATP-dependent protease subunit HslV, found in Treponema denticola (strain ATCC 35405 / DSM 14222 / CIP 103919 / JCM 8153 / KCTC 15104).